Reading from the N-terminus, the 73-residue chain is Mating-type pheromone BBP1(3) (73 aa).

A disordered region spans residues 1–41 (MASSVLARPGPSTVLPAMTRPPPPMAHRAAATPSFARSSQP). C70 is subject to Cysteine methyl ester. C70 is lipidated: S-farnesyl cysteine. The propeptide at 71 to 73 (VVA) is removed in mature form.

Its subcellular location is the cell membrane. Functionally, activates B-regulated development. The chain is Mating-type pheromone BBP1(3) (BBP1(3)) from Schizophyllum commune (Split gill fungus).